The chain runs to 194 residues: Archaetidylinositol phosphate synthase (194 aa).

Helical transmembrane passes span 32–51 (IYTLASPVAAAAALPAWLYI) and 58–78 (LLIALSLLLDAVDGAVARFTG). Residues Asp67, Asp70, Asp88, and Asp92 each coordinate Mg(2+). The active-site Proton acceptor is the Asp92. A run of 3 helical transmembrane segments spans residues 103–123 (LYIAGVHPLIVIAMLSGGLIV), 150–170 (IAILAILAISIYNLQTALALA), and 172–192 (AAAVLVWITVIQRMVYIAGEL).

It belongs to the CDP-alcohol phosphatidyltransferase class-I family. Requires Mn(2+) as cofactor. The cofactor is Mg(2+).

Its subcellular location is the cell membrane. The catalysed reaction is CDP-2,3-bis-O-(phytanyl)-sn-glycerol + 1D-myo-inositol 3-phosphate = saturated 1-archaetidyl-1D-myo-inositol 3-phosphate + CMP + H(+). The protein operates within lipid metabolism; phospholipid metabolism. In terms of biological role, catalyzes the formation of archaetidylinositol phosphate (AIP) from CDP-archaeol (CDP-ArOH or CDP-2,3-bis-(O-phytanyl)-sn-glycerol) and 1L-myo-inositol 1-phosphate (IP or 1D-myo-inositol 3-phosphate). AIP is a precursor of archaetidyl-myo-inositol (AI), an ether-type inositol phospholipid ubiquitously distributed in archaea membranes and essential for glycolipid biosynthesis in archaea. This chain is Archaetidylinositol phosphate synthase, found in Aeropyrum pernix (strain ATCC 700893 / DSM 11879 / JCM 9820 / NBRC 100138 / K1).